Consider the following 222-residue polypeptide: Uclacyanin-3 (222 aa).

A signal peptide spans 1 to 21 (MGSTVAAALLLFLAAVPAVFA). The Phytocyanin domain occupies 22-120 (ATFKVGDISG…GMKLAVPVLA (99 aa)). Cu cation is bound by residues H61, C102, H107, and M112. The cysteines at positions 74 and 108 are disulfide-linked. The tract at residues 121 to 198 (AAPSPSTPSS…APLPPSLSPN (78 aa)) is disordered. Composition is skewed to pro residues over residues 125 to 172 (PSTP…PSAS) and 185 to 195 (TPPPAPLPPSL). Residue N198 is the site of GPI-anchor amidated asparagine attachment. Positions 199-222 (AASKGVMSYGIIGVTMILMYAVMT) are cleaved as a propeptide — removed in mature form.

The protein resides in the cell membrane. Functionally, probably acts as an electron carrier involved in oxygen activation and/or lignin formation. The sequence is that of Uclacyanin-3 (UCC3) from Arabidopsis thaliana (Mouse-ear cress).